Consider the following 180-residue polypeptide: High mobility group protein B1 (180 aa).

Residues Val1–Lys8 carry the Nuclear localization signal (NLS) 1 motif. The segment at residues Val1–Ile44 is a DNA-binding region (HMG box 1). Position 8 is an N6-acetyllysine (Lys8). Residues Lys8 and Lys9 each participate in an isoglutamyl lysine isopeptide (Lys-Gln) (interchain with Q-?) cross-link. Residue Cys10 is modified to Cysteine sulfonic acid (-SO3H). Lys33 is covalently cross-linked (Isoglutamyl lysine isopeptide (Lys-Gln) (interchain with Q-?)). Positions Pro45 to Lys61 are LPS binding (Lipid A). The tract at residues Phe54–Glu73 is cytokine-stimulating activity. N6-acetyllysine is present on Lys55. The HMG box 2 DNA-binding region spans Pro60–Arg128. Ser65 carries the post-translational modification Phosphoserine. Position 71 is a cysteine sulfonic acid (-SO3H) (Cys71). N6-acetyllysine is present on residues Lys92, Lys93, Lys106, Lys137, Lys138, Lys142, and Lys145. Residues Lys115–Lys148 are binding to AGER/RAGE. Residues Ala126–Glu144 show a composition bias toward basic and acidic residues. Positions Ala126–Glu180 are disordered. The short motif at Ala143–Lys149 is the Nuclear localization signal (NLS) 2 element. An NLS 2 region spans residues Ala143 to Lys149. Residue Lys145 forms an Isoglutamyl lysine isopeptide (Lys-Gln) (interchain with Q-?) linkage. Residue Ser146 is modified to ADP-ribosylserine. An N6-acetyllysine mark is found at Lys147, Lys148, Lys149, and Lys150. Isoglutamyl lysine isopeptide (Lys-Gln) (interchain with Q-?) cross-links involve residues Lys147, Lys148, and Lys149. Acidic residues predominate over residues Glu152–Glu180.

This sequence belongs to the HMGB family. In terms of assembly, interacts (fully reduced HMGB1) with CXCL12; probably in a 1:2 ratio involving two molecules of CXCL12, each interacting with one HMG box of HMGB1; inhibited by glycyrrhizin. Associates with the TLR4:LY96 receptor complex. Component of the RAG complex composed of core components RAG1 and RAG2, and associated component HMGB1 or HMGB2. Interacts (in cytoplasm upon starvation) with BECN1; inhibits the interaction of BECN1 and BCL2 leading to promotion of autophagy. Interacts with KPNA1; involved in nuclear import. Interacts with SREBF1, TLR2, TLR4, TLR9, PTPRZ1, APEX1, FEN1, POLB, TERT. Interacts with IL1B, AGER, MSH2, XPA, XPC, HNF1A, TP53. Interacts with CD24; the probable CD24:SIGLEC10 complex is proposed to inhibit HGMB1-mediated tissue damage immune response. Interacts with THBD; prevents HGMB1 interaction with ACER/RAGE and inhibits HGMB1 pro-inflammatory activity. Interacts with HAVCR2; impairs HMGB1 binding to B-DNA and likely HMGB1-mediated innate immune response. Interacts with XPO1; mediating nuclear export. Interacts with receptor RAGE/AGER. Phosphorylated at serine residues. Phosphorylation in both NLS regions is required for cytoplasmic translocation followed by secretion. In terms of processing, acetylated on multiple sites upon stimulation with LPS. Acetylation on lysine residues in the nuclear localization signals (NLS 1 and NLS 2) leads to cytoplasmic localization and subsequent secretion. Post-translationally, reduction/oxidation of cysteine residues and a possible intramolecular disulfide bond give rise to different redox forms with specific functional activities in various cellular compartments: 1- fully reduced HMGB1 (HMGB1C23hC45hC106h), 2-disulfide HMGB1 (HMGB1C23-C45C106h) and 3- sulfonyl HMGB1 (HMGB1C23soC45soC106so). Poly-ADP-ribosylated by PARP1 when secreted following stimulation with LPS. In terms of processing, in vitro cleavage by CASP1 is liberating a HMG box 1-containing peptide which may mediate immunogenic activity; the peptide antagonizes apoptosis-induced immune tolerance. Can be proteolytically cleaved by a thrombin:thrombomodulin complex; reduces binding to heparin and pro-inflammatory activities. Post-translationally, forms covalent cross-links mediated by transglutaminase TGM2, between a glutamine and the epsilon-amino group of a lysine residue, forming homopolymers and heteropolymers.

It localises to the nucleus. Its subcellular location is the chromosome. The protein resides in the cytoplasm. It is found in the secreted. The protein localises to the cell membrane. It localises to the endosome. Its subcellular location is the endoplasmic reticulum-Golgi intermediate compartment. Its function is as follows. Multifunctional redox sensitive protein with various roles in different cellular compartments. In the nucleus is one of the major chromatin-associated non-histone proteins and acts as a DNA chaperone involved in replication, transcription, chromatin remodeling, V(D)J recombination, DNA repair and genome stability. Proposed to be an universal biosensor for nucleic acids. Promotes host inflammatory response to sterile and infectious signals and is involved in the coordination and integration of innate and adaptive immune responses. In the cytoplasm functions as a sensor and/or chaperone for immunogenic nucleic acids implicating the activation of TLR9-mediated immune responses, and mediates autophagy. Acts as a danger-associated molecular pattern (DAMP) molecule that amplifies immune responses during tissue injury. Released to the extracellular environment can bind DNA, nucleosomes, IL-1 beta, CXCL12, AGER isoform 2/sRAGE, lipopolysaccharide (LPS) and lipoteichoic acid (LTA), and activates cells through engagement of multiple surface receptors. In the extracellular compartment fully reduced HMGB1 (released by necrosis) acts as a chemokine, disulfide HMGB1 (actively secreted) as a cytokine, and sulfonyl HMGB1 (released from apoptotic cells) promotes immunological tolerance. Has proangiogenic activity. May be involved in platelet activation. Binds to phosphatidylserine and phosphatidylethanolamide. Bound to RAGE mediates signaling for neuronal outgrowth. May play a role in accumulation of expanded polyglutamine (polyQ) proteins. Nuclear functions are attributed to fully reduced HGMB1. Associates with chromatin and binds DNA with a preference to non-canonical DNA structures such as single-stranded DNA, DNA-containing cruciforms or bent structures, supercoiled DNA and ZDNA. Can bent DNA and enhance DNA flexibility by looping thus providing a mechanism to promote activities on various gene promoters by enhancing transcription factor binding and/or bringing distant regulatory sequences into close proximity. May be involved in nucleotide excision repair (NER), mismatch repair (MMR) and base excision repair (BER) pathways, and double strand break repair such as non-homologous end joining (NHEJ). Involved in V(D)J recombination by acting as a cofactor of the RAG complex: acts by stimulating cleavage and RAG protein binding at the 23 bp spacer of conserved recombination signal sequences (RSS). In vitro can displace histone H1 from highly bent DNA. Can restructure the canonical nucleosome leading to relaxation of structural constraints for transcription factor-binding. Enhances binding of sterol regulatory element-binding proteins (SREBPs) such as SREBF1 to their cognate DNA sequences and increases their transcriptional activities. Facilitates binding of TP53 to DNA. May be involved in mitochondrial quality control and autophagy in a transcription-dependent fashion implicating HSPB1. Can modulate the activity of the telomerase complex and may be involved in telomere maintenance. In terms of biological role, in the cytoplasm proposed to dissociate the BECN1:BCL2 complex via competitive interaction with BECN1 leading to autophagy activation. Can protect BECN1 and ATG5 from calpain-mediated cleavage and thus proposed to control their proautophagic and proapoptotic functions and to regulate the extent and severity of inflammation-associated cellular injury. In myeloid cells has a protective role against endotoxemia and bacterial infection by promoting autophagy. Involved in endosomal translocation and activation of TLR9 in response to CpG-DNA in macrophages. Functionally, in the extracellular compartment (following either active secretion or passive release) involved in regulation of the inflammatory response. Fully reduced HGMB1 (which subsequently gets oxidized after release) in association with CXCL12 mediates the recruitment of inflammatory cells during the initial phase of tissue injury; the CXCL12:HMGB1 complex triggers CXCR4 homodimerization. Induces the migration of monocyte-derived immature dendritic cells and seems to regulate adhesive and migratory functions of neutrophils implicating AGER/RAGE and ITGAM. Can bind to various types of DNA and RNA including microbial unmethylated CpG-DNA to enhance the innate immune response to nucleic acids. Proposed to act in promiscuous DNA/RNA sensing which cooperates with subsequent discriminative sensing by specific pattern recognition receptors. Promotes extracellular DNA-induced AIM2 inflammasome activation implicating AGER/RAGE. Disulfide HMGB1 binds to transmembrane receptors, such as AGER/RAGE, TLR2, TLR4 and probably TREM1, thus activating their signal transduction pathways. Mediates the release of cytokines/chemokines such as TNF, IL-1, IL-6, IL-8, CCL2, CCL3, CCL4 and CXCL10. Promotes secretion of interferon-gamma by macrophage-stimulated natural killer (NK) cells in concert with other cytokines like IL-2 or IL-12. TLR4 is proposed to be the primary receptor promoting macrophage activation and signaling through TLR4 seems to implicate LY96/MD-2. In bacterial LPS- or LTA-mediated inflammatory responses binds to the endotoxins and transfers them to CD14 for signaling to the respective TLR4:LY96 and TLR2 complexes. Contributes to tumor proliferation by association with ACER/RAGE. Can bind to IL1-beta and signals through the IL1R1:IL1RAP receptor complex. Binding to class A CpG activates cytokine production in plasmacytoid dendritic cells implicating TLR9, MYD88 and AGER/RAGE and can activate autoreactive B cells. Via HMGB1-containing chromatin immune complexes may also promote B cell responses to endogenous TLR9 ligands through a B-cell receptor (BCR)-dependent and ACER/RAGE-independent mechanism. Inhibits phagocytosis of apoptotic cells by macrophages; the function is dependent on poly-ADP-ribosylation and involves binding to phosphatidylserine on the cell surface of apoptotic cells. In adaptive immunity may be involved in enhancing immunity through activation of effector T-cells and suppression of regulatory T (TReg) cells. In contrast, without implicating effector or regulatory T-cells, required for tumor infiltration and activation of T-cells expressing the lymphotoxin LTA:LTB heterotrimer thus promoting tumor malignant progression. Also reported to limit proliferation of T-cells. Released HMGB1:nucleosome complexes formed during apoptosis can signal through TLR2 to induce cytokine production. Involved in induction of immunological tolerance by apoptotic cells; its pro-inflammatory activities when released by apoptotic cells are neutralized by reactive oxygen species (ROS)-dependent oxidation specifically on Cys-106. During macrophage activation by activated lymphocyte-derived self apoptotic DNA (ALD-DNA) promotes recruitment of ALD-DNA to endosomes. In Cricetulus griseus (Chinese hamster), this protein is High mobility group protein B1 (HMGB1).